The chain runs to 375 residues: Transaldolase (375 aa).

The active-site Schiff-base intermediate with substrate is the K145.

The protein belongs to the transaldolase family. Type 2 subfamily.

The protein resides in the cytoplasm. The enzyme catalyses D-sedoheptulose 7-phosphate + D-glyceraldehyde 3-phosphate = D-erythrose 4-phosphate + beta-D-fructose 6-phosphate. The protein operates within carbohydrate degradation; pentose phosphate pathway; D-glyceraldehyde 3-phosphate and beta-D-fructose 6-phosphate from D-ribose 5-phosphate and D-xylulose 5-phosphate (non-oxidative stage): step 2/3. Its function is as follows. Transaldolase is important for the balance of metabolites in the pentose-phosphate pathway. This is Transaldolase from Mycobacterium leprae (strain Br4923).